Here is a 23-residue protein sequence, read N- to C-terminus: Apolipophorin-1 (23 aa).

The span at 1–15 shows a compositional bias: basic and acidic residues; it reads SVKSEVDNFDKHLKA. The tract at residues 1-23 is disordered; the sequence is SVKSEVDNFDKHLKAESAPFNNE.

As to expression, expressed in hemolymph.

The protein localises to the secreted. Constitutes the major component of lipophorin, which mediates transport for various types of lipids in hemolymph. Acts by forming lipoprotein particles that bind lipoproteins and lipids. The polypeptide is Apolipophorin-1 (Galleria mellonella (Greater wax moth)).